The following is a 422-amino-acid chain: Transcription initiation factor TFIID subunit 15b (422 aa).

Disordered regions lie at residues 1 to 24, 47 to 94, 111 to 263, and 368 to 422; these read MAGM…DGYG, YGGR…PNPS, ALAP…DAAT, and MAEK…SRPY. Composition is skewed to gly residues over residues 8–24 and 47–83; these read DGGG…DGYG and YGGR…GGGG. The RanBP2-type zinc finger occupies 84 to 115; sequence RDGDWRCPNPSCGNVNFARRVECNKCGALAPS. Residues 123–133 are compositionally biased toward gly residues; that stretch reads DRGGGGYSRGG. A compositionally biased stretch (basic and acidic residues) spans 134-156; sequence GDSDRGGGRGGRNDSGRSYESSR. 2 stretches are compositionally biased toward gly residues: residues 219-229 and 236-247; these read PSYGGPRGGYG and GGRGGRSGGYDG. The span at 252–263 shows a compositional bias: basic and acidic residues; sequence RRQEASYEDAAT. Residues 280-371 form the RRM domain; the sequence is ARIYISNLPP…NKISVTMAEK (92 aa). Residues 382-397 are compositionally biased toward gly residues; that stretch reads RGGGRGGGGGGYGGGG.

The protein belongs to the TAF15 family. As to quaternary structure, component of the TFIID complex. TFIID is composed of TATA binding protein (TBP) and a number of TBP-associated factors (TAFs) whose MWs range from 14-217 kDa. Interacts with TAF4, TAF4B, TAF5, TAF12B and TAF14. Expressed in roots, leaves and inflorescences.

The protein localises to the nucleus. Its function is as follows. TAFs are components of the transcription factor IID (TFIID) complex that is essential for mediating regulation of RNA polymerase transcription. The sequence is that of Transcription initiation factor TFIID subunit 15b (TAF15B) from Arabidopsis thaliana (Mouse-ear cress).